Consider the following 443-residue polypeptide: Carboxypeptidase M (443 aa).

The N-terminal stretch at 1 to 17 (MDFPCLWLGLLLPLVAA) is a signal peptide. The 291-residue stretch at 21–311 (NYHRQEGMEA…ASLIEYIKQV (291 aa)) folds into the Peptidase M14 domain. Residue Asn38 is glycosylated (N-linked (GlcNAc...) asparagine). The Zn(2+) site is built by His83 and Glu86. 2 N-linked (GlcNAc...) asparagine glycosylation sites follow: Asn115 and Asn164. Intrachain disulfides connect Cys138–Cys285, Cys242–Cys284, and Cys341–Cys410. Zn(2+) is bound at residue His190. The active-site Proton donor/acceptor is the Glu281. N-linked (GlcNAc...) asparagine glycans are attached at residues Asn363 and Asn384. A lipid anchor (GPI-anchor amidated serine) is attached at Ser423. Positions 424 to 443 (AATKPSLFLFLVSLLHIFFK) are cleaved as a propeptide — removed in mature form.

The protein belongs to the peptidase M14 family. Zn(2+) serves as cofactor.

It localises to the cell membrane. The enzyme catalyses Cleavage of C-terminal arginine or lysine residues from polypeptides.. With respect to regulation, inhibited by O-phenanthroline and MGTA and activated by cobalt. Specifically removes C-terminal basic residues (Arg or Lys) from peptides and proteins. It is believed to play important roles in the control of peptide hormone and growth factor activity at the cell surface, and in the membrane-localized degradation of extracellular proteins. This is Carboxypeptidase M (CPM) from Homo sapiens (Human).